The primary structure comprises 331 residues: MAPALPITLPSKMSLRSLKWSLLLLSLLSFLVMWYLSLPHYNVIERVNWMYFYEYEPIYRQDFHFTLREHSNCSHQNPFLVILVTSHPADVKARQAIRVTWGEKKSWWGYEVLTFFLLGQQAEREDKVLALSLEDEHLLYGDIIRQDFLDTYNNLTLKTIMAFRWVTEFCPNARYIMKTDTDVFINTGNLVKYLLNLNHSEKFFTGYPLIDNYSYRGFYQKTHISYQEYPFKVFPPYCSGLGYIMSRDLVPRIYEMMSHVKPIKFEDVYVGICLNLLKVDIHIPEDTNLFFLYRIHLDVCQLRRVIAAHGFSSKEIITFWQVMLRNTTCHY.

Topologically, residues 1–20 (MAPALPITLPSKMSLRSLKW) are cytoplasmic. The chain crosses the membrane as a helical; Signal-anchor for type II membrane protein span at residues 21 to 43 (SLLLLSLLSFLVMWYLSLPHYNV). The Lumenal segment spans residues 44–331 (IERVNWMYFY…VMLRNTTCHY (288 aa)). 5 N-linked (GlcNAc...) asparagine glycosylation sites follow: asparagine 72, asparagine 154, asparagine 198, asparagine 212, and asparagine 326.

Belongs to the glycosyltransferase 31 family. It depends on Mg(2+) as a cofactor.

It localises to the golgi apparatus membrane. It catalyses the reaction a globoside Gb3Cer (d18:1(4E)) + UDP-N-acetyl-alpha-D-galactosamine = a globoside Gb4Cer (d18:1(4E)) + UDP + H(+). It functions in the pathway protein modification; protein glycosylation. Functionally, transfers N-acetylgalactosamine onto globotriaosylceramide. Plays a critical role in preimplantation stage embryonic development. This chain is UDP-GalNAc:beta-1,3-N-acetylgalactosaminyltransferase 1 (B3GALNT1), found in Sus scrofa (Pig).